We begin with the raw amino-acid sequence, 312 residues long: Holliday junction branch migration complex subunit RuvB (312 aa).

Positions 1–168 (MKTNYEFRPQ…FGHIFHLNEY (168 aa)) are large ATPase domain (RuvB-L). ATP-binding positions include arginine 8, glycine 49, lysine 52, threonine 53, threonine 54, 115–117 (EDF), arginine 158, tyrosine 168, and arginine 206. Residue threonine 53 coordinates Mg(2+). The small ATPAse domain (RuvB-S) stretch occupies residues 169 to 234 (EPSEISAIIL…DIKNIFKKIQ (66 aa)). A head domain (RuvB-H) region spans residues 237–312 (EFGLDEQDIN…DFLKNNQLIK (76 aa)). DNA-binding residues include lysine 290 and arginine 295.

The protein belongs to the RuvB family. In terms of assembly, homohexamer. Forms an RuvA(8)-RuvB(12)-Holliday junction (HJ) complex. HJ DNA is sandwiched between 2 RuvA tetramers; dsDNA enters through RuvA and exits via RuvB. An RuvB hexamer assembles on each DNA strand where it exits the tetramer. Each RuvB hexamer is contacted by two RuvA subunits (via domain III) on 2 adjacent RuvB subunits; this complex drives branch migration. In the full resolvosome a probable DNA-RuvA(4)-RuvB(12)-RuvC(2) complex forms which resolves the HJ.

The protein localises to the cytoplasm. The enzyme catalyses ATP + H2O = ADP + phosphate + H(+). The RuvA-RuvB-RuvC complex processes Holliday junction (HJ) DNA during genetic recombination and DNA repair, while the RuvA-RuvB complex plays an important role in the rescue of blocked DNA replication forks via replication fork reversal (RFR). RuvA specifically binds to HJ cruciform DNA, conferring on it an open structure. The RuvB hexamer acts as an ATP-dependent pump, pulling dsDNA into and through the RuvAB complex. RuvB forms 2 homohexamers on either side of HJ DNA bound by 1 or 2 RuvA tetramers; 4 subunits per hexamer contact DNA at a time. Coordinated motions by a converter formed by DNA-disengaged RuvB subunits stimulates ATP hydrolysis and nucleotide exchange. Immobilization of the converter enables RuvB to convert the ATP-contained energy into a lever motion, pulling 2 nucleotides of DNA out of the RuvA tetramer per ATP hydrolyzed, thus driving DNA branch migration. The RuvB motors rotate together with the DNA substrate, which together with the progressing nucleotide cycle form the mechanistic basis for DNA recombination by continuous HJ branch migration. Branch migration allows RuvC to scan DNA until it finds its consensus sequence, where it cleaves and resolves cruciform DNA. The protein is Holliday junction branch migration complex subunit RuvB of Ureaplasma parvum serovar 3 (strain ATCC 27815 / 27 / NCTC 11736).